The chain runs to 407 residues: Polygalacturonase (407 aa).

An N-terminal signal peptide occupies residues 1–26 (MAPHLNIVPSMFVLLLLFISASKVQS). PbH1 repeat units lie at residues 180–206 (CKNI…HMGK) and 207–228 (SEGV…SIGD). Asparagine 182 carries an N-linked (GlcNAc...) asparagine glycan. The active-site Proton donor is aspartate 221. Cysteine 223 and cysteine 240 are joined by a disulfide. Residue histidine 244 is part of the active site. 2 PbH1 repeats span residues 260–281 (VEGI…RIKT) and 290–311 (VSEI…LIDQ). 4 N-linked (GlcNAc...) asparagine glycosylation sites follow: asparagine 267, asparagine 272, asparagine 302, and asparagine 331. Cystine bridges form between cysteine 351–cysteine 357 and cysteine 379–cysteine 395. The stretch at 357-384 (CQNVELADIDIKHNGAEPATSQCLNVKP) is one PbH1 5 repeat.

Belongs to the glycosyl hydrolase 28 family. Pollen.

It is found in the secreted. Its subcellular location is the cell wall. The catalysed reaction is (1,4-alpha-D-galacturonosyl)n+m + H2O = (1,4-alpha-D-galacturonosyl)n + (1,4-alpha-D-galacturonosyl)m.. Its function is as follows. May function in the depolymerization of the pectin in its walls during pollen tube elongation, or in that of the pistil during pollination. This Gossypium hirsutum (Upland cotton) protein is Polygalacturonase (G9).